The chain runs to 511 residues: Cytochrome P450 89A9 (511 aa).

The helical; Signal-anchor for type II membrane protein transmembrane segment at 6–26 (IIFLIISSLTFSIFLKLIFFF) threads the bilayer. Cys454 is a binding site for heme.

Belongs to the cytochrome P450 family. Requires heme as cofactor.

It localises to the endoplasmic reticulum membrane. It carries out the reaction primary fluorescent chlorophyll catabolite + reduced [NADPH--hemoprotein reductase] + O2 = primary fluorescent dioxobilin-type chlorophyll catabolite + formate + oxidized [NADPH--hemoprotein reductase] + 2 H(+). It functions in the pathway porphyrin-containing compound metabolism; chlorophyll degradation. Functionally, involved in the chlorophyll breakdown by its action in nonpolar primary fluorescent chlorophyll catabolite (pFCC) decarbonylation. Involved in the formation of major chlorophyll breakdown products, including non-fluorescent dioxobilin-type chlorophyll catabolites (NDCCs), during leaf senescence. The sequence is that of Cytochrome P450 89A9 from Arabidopsis thaliana (Mouse-ear cress).